Consider the following 116-residue polypeptide: MKKQNLVSFPENLEAMRKFSETYAKRTGTFFCIDSSVTAVVIEGLARHKDQYGAPLCPCRHYEDKKAEISATYWNCPCVPMRERRECHCMLFLTPDNEFASDLQEIDKTTLTEQIS.

Cysteine 57 contributes to the [4Fe-4S] cluster binding site. Cysteine 59 serves as the catalytic Nucleophile. Residues cysteine 59 and cysteine 89 are joined by a disulfide bond. Cysteine 76, cysteine 78, and cysteine 87 together coordinate [4Fe-4S] cluster.

The protein belongs to the ferredoxin thioredoxin reductase beta subunit family. As to quaternary structure, heterodimer of subunit A (variable subunit) and subunit B (catalytic subunit). Heterodimeric FTR forms a complex with ferredoxin and thioredoxin. [4Fe-4S] cluster is required as a cofactor.

Its subcellular location is the plastid. The protein resides in the chloroplast. The catalysed reaction is [thioredoxin]-disulfide + 2 reduced [2Fe-2S]-[ferredoxin] + 2 H(+) = [thioredoxin]-dithiol + 2 oxidized [2Fe-2S]-[ferredoxin]. Its function is as follows. Catalytic subunit of the ferredoxin-thioredoxin reductase (FTR), which catalyzes the two-electron reduction of thioredoxins by the electrons provided by reduced ferredoxin. The polypeptide is Ferredoxin-thioredoxin reductase, catalytic chain (ftrB) (Pyropia yezoensis (Susabi-nori)).